Here is a 123-residue protein sequence, read N- to C-terminus: Crossover junction endodeoxyribonuclease Hjc (123 aa).

Glu9 is a Mg(2+) binding site. Residue Ser29 is part of the active site. Asp33 and Glu46 together coordinate Mg(2+).

This sequence belongs to the Holliday junction resolvase Hjc family. Homodimer. Probably interacts with PCNA and RadB. Mg(2+) serves as cofactor. Requires Mn(2+) as cofactor.

The catalysed reaction is Endonucleolytic cleavage at a junction such as a reciprocal single-stranded crossover between two homologous DNA duplexes (Holliday junction).. With respect to regulation, cleavage inhibited by RadB in the absence (but not presence) of ATP. Its function is as follows. A structure-specific endonuclease that resolves Holliday junction (HJ) intermediates during genetic recombination. Cleaves 4-way DNA junctions introducing paired nicks in opposing strands, leaving a 5'-terminal phosphate and a 3'-terminal hydroxyl group that are subsequently ligated to produce recombinant products. Cleaves both mobile and immobile junctions. Binds 4-way junction DNA, a synthetic Hj, binding is not competed by dsDNA. The protein is Crossover junction endodeoxyribonuclease Hjc of Pyrococcus furiosus (strain ATCC 43587 / DSM 3638 / JCM 8422 / Vc1).